Reading from the N-terminus, the 187-residue chain is Insulin-like growth factor 2 (187 aa).

The N-terminal stretch at 1-23 (MCAARQILLLLLAFLAYALDSAA) is a signal peptide. The interval 25 to 51 (YGTAETLCGGELVDTLQFVCGDRGFYF) is b. 3 disulfide bridges follow: C32–C71, C44–C84, and C70–C75. A c region spans residues 52–64 (SRPVGRNNRRINR). The tract at residues 64-85 (RGIVEECCFRSCDLALLETYCA) is a. Positions 86 to 91 (KSVKSE) are d. A propeptide spans 92 to 187 (RDLSATSLAG…ASPEATGPQE (96 aa)) (e peptide). The interval 162 to 187 (HRPLISLPSQRPPAPRASPEATGPQE) is disordered.

It belongs to the insulin family.

The protein resides in the secreted. In terms of biological role, the insulin-like growth factors, isolated from plasma, are structurally and functionally related to insulin but have a much higher growth-promoting activity. Acts as a ligand for integrin which is required for IGF2 signaling. The sequence is that of Insulin-like growth factor 2 from Gallus gallus (Chicken).